Reading from the N-terminus, the 1382-residue chain is Hepatocyte growth factor receptor (1382 aa).

The N-terminal stretch at 1-24 is a signal peptide; that stretch reads MKASAVLAPGILVILFTLVQKSNC. At 25–933 the chain is on the extracellular side; sequence ECKEALVKSK…VIVQPDQNIT (909 aa). One can recognise a Sema domain in the interval 27-516; that stretch reads KEALVKSKMN…TGKKITKIPL (490 aa). The N-linked (GlcNAc...) asparagine glycan is linked to asparagine 45. Intrachain disulfides connect cysteine 95–cysteine 101, cysteine 98–cysteine 160, cysteine 133–cysteine 141, and cysteine 173–cysteine 176. N-linked (GlcNAc...) asparagine glycosylation is present at asparagine 106. Residues asparagine 203 and asparagine 359 are each glycosylated (N-linked (GlcNAc...) asparagine). 2 disulfide bridges follow: cysteine 299–cysteine 364 and cysteine 386–cysteine 398. N-linked (GlcNAc...) asparagine glycosylation is found at asparagine 400 and asparagine 406. 4 disulfide bridges follow: cysteine 521/cysteine 539, cysteine 527/cysteine 562, cysteine 530/cysteine 546, and cysteine 542/cysteine 552. IPT/TIG domains are found at residues 564–656, 658–740, and 743–837; these read PTIY…FSYV, PIIT…FSYQ, and PIIY…LIYV. The O-linked (Man) threonine glycan is linked to threonine 583. Asparagine 608 and asparagine 636 each carry an N-linked (GlcNAc...) asparagine glycan. Residues threonine 677 and threonine 762 are each glycosylated (O-linked (Man) threonine). 3 N-linked (GlcNAc...) asparagine glycosylation sites follow: asparagine 786, asparagine 880, and asparagine 931. Residues 934–956 traverse the membrane as a helical segment; the sequence is EFIVGILSISGILLTLLGLLLWW. The Cytoplasmic portion of the chain corresponds to 957–1382; it reads KKKKQIKDLG…QDNFDSEGNT (426 aa). At serine 967 the chain carries Phosphoserine. At threonine 978 the chain carries Phosphothreonine. Phosphoserine occurs at positions 991, 998, and 1001. Position 1004 is a phosphotyrosine (tyrosine 1004). The Protein kinase domain maps to 1079 to 1346; the sequence is VHFNEVIGRG…RISAIFSTFI (268 aa). ATP contacts are provided by residues 1085 to 1093 and lysine 1111; that span reads IGRGHFGCV. The active-site Proton acceptor is the aspartate 1205. The segment at 1213-1382 is interaction with RANBP9; sequence LDENFTVKVA…QDNFDSEGNT (170 aa). Tyrosine 1231 carries the post-translational modification Phosphotyrosine. 2 positions are modified to phosphotyrosine; by autocatalysis: tyrosine 1235 and tyrosine 1236. Threonine 1290 is modified (phosphothreonine). Residues 1321–1360 are interaction with MUC20; that stretch reads WHPKAELRPSFSELVSRISAIFSTFIGEHYVHVNATYVNI. Phosphotyrosine; by autocatalysis is present on residues tyrosine 1350 and tyrosine 1357. Tyrosine 1366 is subject to Phosphotyrosine.

Belongs to the protein kinase superfamily. Tyr protein kinase family. As to quaternary structure, heterodimer made of an alpha chain (50 kDa) and a beta chain (145 kDa) which are disulfide linked. Binds PLXNB1. Interacts when phosphorylated with downstream effectors including STAT3, PIK3R1, SRC, PCLG1, GRB2 and GAB1. Interacts with SPSB1, SPSB2 and SPSB4. Interacts with INPP5D/SHIP1. When phosphorylated at Tyr-1357, interacts with INPPL1/SHIP2. Interacts with RANBP9 and RANBP10, as well as SPSB1, SPSB2, SPSB3 and SPSB4. SPSB1 binding occurs in the presence and in the absence of HGF, however HGF treatment has a positive effect on this interaction. Interacts with MUC20; prevents interaction with GRB2 and suppresses hepatocyte growth factor-induced cell proliferation. Interacts with GRB10. Interacts with PTPN1 and PTPN2. Interacts with tensin TNS3. Interacts (when phosphorylated) with tensin TNS4 (via SH2 domain); the interaction increases MET protein stability by inhibiting MET endocytosis and subsequent lysosomal degradation. Post-translationally, autophosphorylated in response to ligand binding on Tyr-1235 and Tyr-1236 in the kinase domain leading to further phosphorylation of Tyr-1350 and Tyr-1357 in the C-terminal multifunctional docking site. Dephosphorylated by PTPRJ at Tyr-1350 and Tyr-1366. Dephosphorylated by PTPN1 and PTPN2. Ubiquitinated. Ubiquitination by CBL regulates the receptor stability and activity through proteasomal degradation. In terms of processing, O-mannosylation of IPT/TIG domains by TMEM260 is required for protein maturation. O-mannosylated residues are composed of single mannose glycans that are not elongated or modified.

The protein resides in the membrane. The enzyme catalyses L-tyrosyl-[protein] + ATP = O-phospho-L-tyrosyl-[protein] + ADP + H(+). In its inactive state, the C-terminal tail interacts with the catalytic domain and inhibits the kinase activity. Upon ligand binding, the C-terminal tail is displaced and becomes phosphorylated, thus increasing the kinase activity. Its function is as follows. Receptor tyrosine kinase that transduces signals from the extracellular matrix into the cytoplasm by binding to hepatocyte growth factor/HGF ligand. Regulates many physiological processes including proliferation, scattering, morphogenesis and survival. Ligand binding at the cell surface induces autophosphorylation of MET on its intracellular domain that provides docking sites for downstream signaling molecules. Following activation by ligand, interacts with the PI3-kinase subunit PIK3R1, PLCG1, SRC, GRB2, STAT3 or the adapter GAB1. Recruitment of these downstream effectors by MET leads to the activation of several signaling cascades including the RAS-ERK, PI3 kinase-AKT, or PLCgamma-PKC. The RAS-ERK activation is associated with the morphogenetic effects while PI3K/AKT coordinates prosurvival effects. During embryonic development, MET signaling plays a role in gastrulation, development and migration of muscles and neuronal precursors, angiogenesis and kidney formation. In adults, participates in wound healing as well as organ regeneration and tissue remodeling. Also promotes differentiation and proliferation of hematopoietic cells. The polypeptide is Hepatocyte growth factor receptor (MET) (Atelerix albiventris (Middle-African hedgehog)).